Consider the following 298-residue polypeptide: MKDKFGREIRSLRISITNKCNLQCFYCHREGHDSNNDRYMTPEEIGIIAKTSTKFGVKKIKISGGEPLLRKDVCEIIENIKDERIKDISLTTNGILLENLAEKLKDAGLNRVNVSLDTLNPELYKKITKFGDVERVINGIKKAIDVSLTPLKVNFLAMSINIKDLPDIMEFCRDIGAILQIIEFIPLKEELKGYYYNISPIENEIKEKADKVITRNFMQNRKKYIVDGLEIEFVRPMDNSEFCMHCTRIRLTYDGYLKPCLLRDDNLVDVLTPLRKGENLEPYFIECINRREPYFKIK.

The Radical SAM core domain maps to 4 to 230 (KFGREIRSLR…RKKYIVDGLE (227 aa)). Position 13 (R13) interacts with GTP. [4Fe-4S] cluster-binding residues include C20 and C24. Y26 contributes to the S-adenosyl-L-methionine binding site. C27 is a [4Fe-4S] cluster binding site. K61 provides a ligand contact to GTP. G65 lines the S-adenosyl-L-methionine pocket. T91 serves as a coordination point for GTP. S-adenosyl-L-methionine is bound at residue S115. K152 is a GTP binding site. 2 residues coordinate [4Fe-4S] cluster: C243 and C246. 248-250 (RIR) lines the GTP pocket. [4Fe-4S] cluster is bound at residue C260.

The protein belongs to the radical SAM superfamily. MoaA family. The cofactor is [4Fe-4S] cluster.

The enzyme catalyses GTP + AH2 + S-adenosyl-L-methionine = (8S)-3',8-cyclo-7,8-dihydroguanosine 5'-triphosphate + 5'-deoxyadenosine + L-methionine + A + H(+). Its pathway is cofactor biosynthesis; molybdopterin biosynthesis. Functionally, catalyzes the cyclization of GTP to (8S)-3',8-cyclo-7,8-dihydroguanosine 5'-triphosphate. The chain is Probable GTP 3',8-cyclase from Methanocaldococcus jannaschii (strain ATCC 43067 / DSM 2661 / JAL-1 / JCM 10045 / NBRC 100440) (Methanococcus jannaschii).